The sequence spans 100 residues: Small ribosomal subunit protein uS14 (100 aa).

It belongs to the universal ribosomal protein uS14 family. Part of the 30S ribosomal subunit. Contacts proteins S3 and S10.

Binds 16S rRNA, required for the assembly of 30S particles and may also be responsible for determining the conformation of the 16S rRNA at the A site. This is Small ribosomal subunit protein uS14 from Acaryochloris marina (strain MBIC 11017).